Consider the following 183-residue polypeptide: Inner membrane-spanning protein YciB (183 aa).

The next 5 membrane-spanning stretches (helical) occupy residues 19–39, 53–73, 76–96, 121–141, and 151–171; these read LYGV…QLIV, IMGI…DLNF, WKVT…QFVF, LGWA…SYYF, and TFGF…YLYP.

It belongs to the YciB family.

It is found in the cell inner membrane. Functionally, plays a role in cell envelope biogenesis, maintenance of cell envelope integrity and membrane homeostasis. The protein is Inner membrane-spanning protein YciB of Actinobacillus pleuropneumoniae serotype 3 (strain JL03).